The following is a 383-amino-acid chain: Homoserine O-succinyltransferase (383 aa).

In terms of domain architecture, AB hydrolase-1 spans 51–360 (NAILLCHALS…EAEHGHDSFL (310 aa)). Residue Ser-157 is the Nucleophile of the active site. Arg-227 is a binding site for substrate. Residues Asp-323 and His-356 contribute to the active site. Asp-357 is a substrate binding site.

The protein belongs to the AB hydrolase superfamily. MetX family. In terms of assembly, homodimer.

It is found in the cytoplasm. The catalysed reaction is L-homoserine + succinyl-CoA = O-succinyl-L-homoserine + CoA. It participates in amino-acid biosynthesis; L-methionine biosynthesis via de novo pathway; O-succinyl-L-homoserine from L-homoserine: step 1/1. Its function is as follows. Transfers a succinyl group from succinyl-CoA to L-homoserine, forming succinyl-L-homoserine. The polypeptide is Homoserine O-succinyltransferase (Acidithiobacillus ferrooxidans (strain ATCC 23270 / DSM 14882 / CIP 104768 / NCIMB 8455) (Ferrobacillus ferrooxidans (strain ATCC 23270))).